The following is a 394-amino-acid chain: MSKEKFERTKPHVNVGTIGHVDHGKTTLTAAICTVLSKVYGGTARDFASIDNAPEERERGITISTSHVEYDTPSRHYAHVDCPGHADYVKNMITGAAQMDGGILVVAATDGPMPQTREHILLGRQVGIPYIIVFMNKCDMVDDEELLELVEMEVRELLSEYDFPGDDLPVIQGSALGALNGEEQWEAKIVELAEALDSYIPEPERAVDMPFLMPIEDVFSIQGRGTVVTGRIERGILKVGDEVAIVGIKDTTTTTCTGVEMFRKLLDEGRAGENVGALLRGTKRDEVERGQVLAKPGSITPHTKFESEVYVLSKDEGGRHTPFFKGYRPQFYFRTTDVTGDISLPEGVEMVMPGDNIQMVVELISPIAMDEGLRFAIREGGRTVGAGVVAKIFA.

Positions 10–204 constitute a tr-type G domain; it reads KPHVNVGTIG…ALDSYIPEPE (195 aa). The interval 19–26 is G1; that stretch reads GHVDHGKT. 19–26 is a GTP binding site; the sequence is GHVDHGKT. Thr-26 serves as a coordination point for Mg(2+). Residues 60–64 form a G2 region; the sequence is GITIS. The interval 81–84 is G3; sequence DCPG. GTP is bound by residues 81–85 and 136–139; these read DCPGH and NKCD. The G4 stretch occupies residues 136–139; it reads NKCD. The segment at 174 to 176 is G5; that stretch reads SAL.

The protein belongs to the TRAFAC class translation factor GTPase superfamily. Classic translation factor GTPase family. EF-Tu/EF-1A subfamily. Monomer.

The protein localises to the cytoplasm. The enzyme catalyses GTP + H2O = GDP + phosphate + H(+). Its function is as follows. GTP hydrolase that promotes the GTP-dependent binding of aminoacyl-tRNA to the A-site of ribosomes during protein biosynthesis. This Vibrio vulnificus (strain YJ016) protein is Elongation factor Tu 1.